A 92-amino-acid polypeptide reads, in one-letter code: Small ribosomal subunit protein uS19 (92 aa).

The protein belongs to the universal ribosomal protein uS19 family.

Protein S19 forms a complex with S13 that binds strongly to the 16S ribosomal RNA. The polypeptide is Small ribosomal subunit protein uS19 (Prochlorococcus marinus (strain MIT 9312)).